Here is a 121-residue protein sequence, read N- to C-terminus: Large ribosomal subunit protein bL12 (121 aa).

The protein belongs to the bacterial ribosomal protein bL12 family. In terms of assembly, homodimer. Part of the ribosomal stalk of the 50S ribosomal subunit. Forms a multimeric L10(L12)X complex, where L10 forms an elongated spine to which 2 to 4 L12 dimers bind in a sequential fashion. Binds GTP-bound translation factors.

Forms part of the ribosomal stalk which helps the ribosome interact with GTP-bound translation factors. Is thus essential for accurate translation. The polypeptide is Large ribosomal subunit protein bL12 (Limosilactobacillus reuteri (strain DSM 20016) (Lactobacillus reuteri)).